The primary structure comprises 155 residues: MKTPKMNVESFNLDHTKVKAPYVRIADRKKGVNGDLIVKYDVRFKQPNKDHMDMPSLHSLEHLVAEIIRNHASYVIDWSPMGCQTGFYLTVLNHDNYTEILEILEKTMQDVLKATEVPASNEKQCGWAANHTLEGAQNLARAFLDKRAEWSEVGV.

3 residues coordinate Fe cation: histidine 58, histidine 62, and cysteine 125.

It belongs to the LuxS family. In terms of assembly, homodimer. Requires Fe cation as cofactor.

The enzyme catalyses S-(5-deoxy-D-ribos-5-yl)-L-homocysteine = (S)-4,5-dihydroxypentane-2,3-dione + L-homocysteine. Its function is as follows. Involved in the synthesis of autoinducer 2 (AI-2) which is secreted by bacteria and is used to communicate both the cell density and the metabolic potential of the environment. The regulation of gene expression in response to changes in cell density is called quorum sensing. Catalyzes the transformation of S-ribosylhomocysteine (RHC) to homocysteine (HC) and 4,5-dihydroxy-2,3-pentadione (DPD). This chain is S-ribosylhomocysteine lyase, found in Helicobacter pylori (strain Shi470).